Reading from the N-terminus, the 853-residue chain is MFPFGQKGQKIKGTMVVMQKNVLDINSITSVGGIVDQGLGFIGSAVDALTFAATKISIQLISATKADGGKGKIGKSTNLRGKITLPTLGAGEQAYDVNFEWDSDFGIPGAFYIKNFMQNEFYLKSLILEDIPNHGTIHFVCNSWVYNSKNYKTDRIFFANNTYLPSETPAPLLKYREEELKNVRGDGTGERKEWDRIYDYDVYNDLGNPDSGDKYARPVLGGSALPYPRRERTGRGKTRKDPNSEKPSDFVYLPRDEAFGHLKSSDFLAYGIKSVSQDVLPVLTDAFDGNILSLEFDNFAEVHKLYEGGVTLPTNFLSKIAPIPVIKEIFRTDGEQFLKYPPPKVMQVDKSAWMTDEEFARETIAGLNPNVIKIIEEFPLSSKLDTQAYGDHTCIIAKEHLEPNLGGLTVEQAIQNKKLFILDHHDYLIPYLRKINANTTKTYATRTIFFLKDDGTLTPLAIELSKPHPQGEEYGPVSEVYVPASEGVEAYIWLLAKAYVVVNDACYHQIISHWLSTHAIVEPFVIATNRQLSVVHPIYKLLFPHYRDTMNINSLARKALVNADGIIEKTFLWGRYSMEMSAVIYKDWVFTDQALPNDLVKRGVAVKDPSAPHGVRLLIEDYPYASDGLEIWDAIKSWVQEYVSFYYKSDEELQKDPELQAWWKELVEVGHGDLKDKPWWQKMQTREELVEASAILIWIASALHAAVNFGQYPYGGLILNRPTISRRFMPEKGSPEYDALAKNPEKEFLKTITGKKETLIDLTVIEILSRHASDEFYLGQRDGGDYWTSDAGPLEAFKRFGKKLEEIEKKLIEKNKDETLRNRYGPAKMPYTLLYPSSEEGLTFRGIPNSISI.

Positions Ile34–Ala159 constitute a PLAT domain. The region spanning Thr162–Ile853 is the Lipoxygenase domain. The tract at residues Asp213–Phe250 is disordered. The span at Pro228–Phe250 shows a compositional bias: basic and acidic residues. 5 residues coordinate Fe cation: His513, His518, His704, Asn708, and Ile853.

The protein belongs to the lipoxygenase family. In terms of assembly, monomer. The cofactor is Fe cation. In terms of tissue distribution, found in maturing and developing seeds. In young seedlings it is found in cotyledons, hypocotyls, roots and primary leaves.

The protein localises to the cytoplasm. It catalyses the reaction (9Z,12Z)-octadecadienoate + O2 = (9S)-hydroperoxy-(10E,12Z)-octadecadienoate. Its pathway is lipid metabolism; oxylipin biosynthesis. Functionally, plant lipoxygenase may be involved in a number of diverse aspects of plant physiology including growth and development, pest resistance, and senescence or responses to wounding. It catalyzes the hydroperoxidation of lipids containing a cis,cis-1,4-pentadiene structure. This is Linoleate 9S-lipoxygenase-4 (LOX1.5) from Glycine max (Soybean).